We begin with the raw amino-acid sequence, 320 residues long: o-succinylbenzoate synthase (320 aa).

Catalysis depends on Lys133, which acts as the Proton donor. Mg(2+) is bound by residues Asp161, Glu190, and Asp213. Lys235 serves as the catalytic Proton acceptor.

This sequence belongs to the mandelate racemase/muconate lactonizing enzyme family. MenC type 1 subfamily. It depends on a divalent metal cation as a cofactor.

The enzyme catalyses (1R,6R)-6-hydroxy-2-succinyl-cyclohexa-2,4-diene-1-carboxylate = 2-succinylbenzoate + H2O. The protein operates within quinol/quinone metabolism; 1,4-dihydroxy-2-naphthoate biosynthesis; 1,4-dihydroxy-2-naphthoate from chorismate: step 4/7. It functions in the pathway quinol/quinone metabolism; menaquinone biosynthesis. Converts 2-succinyl-6-hydroxy-2,4-cyclohexadiene-1-carboxylate (SHCHC) to 2-succinylbenzoate (OSB). The chain is o-succinylbenzoate synthase from Salmonella agona (strain SL483).